A 126-amino-acid polypeptide reads, in one-letter code: Antimicrobial protein 1 (126 aa).

The signal sequence occupies residues 1-24; it reads MRSSLLLGLTVVLLLGVTVPPCMA.

In terms of tissue distribution, strongly expressed in gills, hemocytes and reproductive tract, with weaker expression in muscle, heart and digestive tract. Not detected in eyes and hepatopancreas (at protein level).

The protein resides in the secreted. In terms of biological role, has antibacterial activity against the Gram-positive bacteria E.coli (MIC&lt;50 ug/ml) and P.aeruginosa (MIC&lt;25 ug/ml), and the Gram-negative bacteria S.aureus (MIC&lt;100 ug/ml) and S.pyogenes (MIC&lt;50 ug/ml). This chain is Antimicrobial protein 1, found in Scylla serrata (Mud crab).